The primary structure comprises 29 residues: Cytochrome c oxidase subunit 7A1, mitochondrial (29 aa).

Positions 1 to 13 (LENRVAEKQKLFQ) are enriched in basic and acidic residues. A disordered region spans residues 1–29 (LENRVAEKQKLFQEDNGLPVHLKGGATDN).

This sequence belongs to the cytochrome c oxidase VIIa family. As to quaternary structure, component of the complex IV (CIV, cytochrome c oxidase), a multisubunit enzyme composed of 14 subunits. The complex is composed of a catalytic core of 3 subunits MT-CO1, MT-CO2 and MT-CO3, encoded in the mitochondrial DNA, and 11 supernumerary subunits COX4I1 (or COX4I2), COX5A, COX5B, COX6A2 (or COX6A1), COX6B1 (or COX6B2), COX6C, COX7A1 (or COX7A2), COX7B, COX7C, COX8B and NDUFA4, which are encoded in the nuclear genome. The complex exists as a monomer or a dimer and forms supercomplexes (SCs) in the inner mitochondrial membrane with NADH-ubiquinone oxidoreductase (complex I, CI) and ubiquinol-cytochrome c oxidoreductase (cytochrome b-c1 complex, complex III, CIII), resulting in different assemblies (supercomplex SCI(1)III(2)IV(1) and megacomplex MCI(2)III(2)IV(2)).

Its subcellular location is the mitochondrion inner membrane. It functions in the pathway energy metabolism; oxidative phosphorylation. In terms of biological role, component of the mitochondrial respiratory complex IV (CIV, also named cytochrome c oxidase complex), the last enzyme in the mitochondrial electron transport chain which drives oxidative phosphorylation. The CIV complex is the component of the respiratory chain that catalyzes the reduction of oxygen to water. Acts as an assembly factor that specifically drives the homodimerization of CIV complexes, mediating the formation of mitochondrial respiratory supercomplexes (respirasomes) containing two CIV: supercomplxes with two molecules of CIV show improved activity. Despite being highly expressed in brown adipose tissue, not required for thermogenesis. This is Cytochrome c oxidase subunit 7A1, mitochondrial (COX7A1) from Ovis aries (Sheep).